Consider the following 98-residue polypeptide: MVAVRRPWPVMVAMLLVLLACLGALVDAYPAKPEAPGEDASPEELSRYYASLRHYLNLVTRQRYGKREVPAALFSKLLFTDDSENLPFRSRPEGVDQW.

Positions 1–28 are cleaved as a signal peptide; it reads MVAVRRPWPVMVAMLLVLLACLGALVDA. Residue Ser41 is modified to Phosphoserine. Tyrosine amide is present on Tyr64. Residues 68–98 constitute a propeptide that is removed on maturation; it reads EVPAALFSKLLFTDDSENLPFRSRPEGVDQW.

It belongs to the NPY family. The peptide YY form is cleaved at Pro-30 by the prolyl endopeptidase FAP (seprase) activity (in vitro) to generate peptide YY(3-36).

Its subcellular location is the secreted. Its function is as follows. This gut peptide inhibits exocrine pancreatic secretion, has a vasoconstrictory action and inhibitis jejunal and colonic mobility. In Rattus norvegicus (Rat), this protein is Peptide YY (Pyy).